The primary structure comprises 128 residues: Large ribosomal subunit protein eL32 (128 aa).

The protein belongs to the eukaryotic ribosomal protein eL32 family.

This is Large ribosomal subunit protein eL32 (rpl32e) from Thermoplasma volcanium (strain ATCC 51530 / DSM 4299 / JCM 9571 / NBRC 15438 / GSS1).